A 291-amino-acid chain; its full sequence is Ribose-phosphate pyrophosphokinase (291 aa).

Residues 34-36 (DGE) and 93-94 (RQ) each bind ATP. Positions 127 and 165 each coordinate Mg(2+). Residue K188 is part of the active site. D-ribose 5-phosphate is bound by residues R190, D216, and 220-224 (STGGT).

This sequence belongs to the ribose-phosphate pyrophosphokinase family. Class III (archaeal) subfamily. It depends on Mg(2+) as a cofactor.

Its subcellular location is the cytoplasm. It catalyses the reaction D-ribose 5-phosphate + ATP = 5-phospho-alpha-D-ribose 1-diphosphate + AMP + H(+). It functions in the pathway metabolic intermediate biosynthesis; 5-phospho-alpha-D-ribose 1-diphosphate biosynthesis; 5-phospho-alpha-D-ribose 1-diphosphate from D-ribose 5-phosphate (route I): step 1/1. In terms of biological role, involved in the biosynthesis of the central metabolite phospho-alpha-D-ribosyl-1-pyrophosphate (PRPP) via the transfer of pyrophosphoryl group from ATP to 1-hydroxyl of ribose-5-phosphate (Rib-5-P). In Sulfolobus acidocaldarius (strain ATCC 33909 / DSM 639 / JCM 8929 / NBRC 15157 / NCIMB 11770), this protein is Ribose-phosphate pyrophosphokinase.